The following is a 587-amino-acid chain: Polyphenol oxidase E, chloroplastic (587 aa).

The N-terminal 87 residues, 1-87 (MSSSSSITTT…AANLAPLATA (87 aa)), are a transit peptide targeting the chloroplast. 2 cysteine pairs are disulfide-bonded: C98–C114 and C113–C180. Cu cation contacts are provided by H179, H197, H206, H328, H332, and H363. A cross-link (2'-(S-cysteinyl)-histidine (Cys-His)) is located at residues 183 to 197 (CNGAYKVGGKELQVH).

Belongs to the tyrosinase family. It depends on Cu(2+) as a cofactor.

The protein localises to the plastid. Its subcellular location is the chloroplast thylakoid lumen. It carries out the reaction 2 catechol + O2 = 2 1,2-benzoquinone + 2 H2O. Its function is as follows. Catalyzes the oxidation of mono- and o-diphenols to o-diquinones. In Solanum lycopersicum (Tomato), this protein is Polyphenol oxidase E, chloroplastic.